The sequence spans 302 residues: Phospho-N-acetylmuramoyl-pentapeptide-transferase (302 aa).

10 helical membrane-spanning segments follow: residues 1 to 21 (MIAANFLLNLFLYPILIKLFR), 42 to 62 (GTPTMGGILFVLTGFLFGMIS), 67 to 87 (MVLLGMFLFFLIGFLDDFLSV), 95 to 115 (LKTYQKALLQTLAAFIMLLLI), 123 to 143 (FFGSTIEMGKWYYLFALLVIV), 154 to 174 (GLDGLAGWIYVSGSIPYWFFL), 178 to 198 (GVSEDILLILGVGVLAFLVFN), 204 to 224 (IFMGDTGSITLGGVLGTVSVL), 229 to 249 (FYLVLFFMIPVIETLSVILQV), and 279 to 299 (IVAVFTVFNLISSLVALEIFG).

Belongs to the glycosyltransferase 4 family. MraY subfamily. The cofactor is Mg(2+).

The protein localises to the cell inner membrane. It carries out the reaction UDP-N-acetyl-alpha-D-muramoyl-L-alanyl-gamma-D-glutamyl-meso-2,6-diaminopimeloyl-D-alanyl-D-alanine + di-trans,octa-cis-undecaprenyl phosphate = di-trans,octa-cis-undecaprenyl diphospho-N-acetyl-alpha-D-muramoyl-L-alanyl-D-glutamyl-meso-2,6-diaminopimeloyl-D-alanyl-D-alanine + UMP. It participates in cell wall biogenesis; peptidoglycan biosynthesis. In terms of biological role, catalyzes the initial step of the lipid cycle reactions in the biosynthesis of the cell wall peptidoglycan: transfers peptidoglycan precursor phospho-MurNAc-pentapeptide from UDP-MurNAc-pentapeptide onto the lipid carrier undecaprenyl phosphate, yielding undecaprenyl-pyrophosphoryl-MurNAc-pentapeptide, known as lipid I. The protein is Phospho-N-acetylmuramoyl-pentapeptide-transferase of Thermotoga maritima (strain ATCC 43589 / DSM 3109 / JCM 10099 / NBRC 100826 / MSB8).